Consider the following 88-residue polypeptide: Alkene monooxygenase system, oxygenase component subunit gamma (88 aa).

It belongs to the TmoB/XamoB family. As to quaternary structure, the alkene monooxygenase multicomponent enzyme system is composed of an electron transfer component and a monooxygenase component interacting with the effector protein XamoD. The electron transfer component is composed of a ferredoxin reductase (XamoF) and a ferredoxin (XamoC), and the monooxygenase component is formed by a heterohexamer (dimer of heterotrimers) of two alpha subunits (XamoA), two beta subunits (XamoE) and two gamma subunits (XamoB).

It is found in the cytoplasm. It catalyses the reaction propene + NADH + O2 + H(+) = 1,2-epoxypropane + NAD(+) + H2O. Inhibited by propyne. Component of the alkene monooxygenase multicomponent enzyme system which catalyzes the O2- and NADH-dependent epoxidation of short chain (C2 to C6) alkenes to their corresponding epoxides. Also able to catalyze the oxidation of a number of chlorinated alkenes, including trichloroethylene, cis- and trans-1,2-dichloroethylene, vinyl chloride, 1-chloropropylene, 1,3-dichloropropylene and 2,3-dichloropropylene. The sequence is that of Alkene monooxygenase system, oxygenase component subunit gamma from Xanthobacter autotrophicus (strain ATCC BAA-1158 / Py2).